The primary structure comprises 258 residues: Membrane-associated protein Vipp1 (258 aa).

Positions 217–258 (MLPPATPVTQAQLPPQQETTPAKSNEVVDAELDSLRKQLDQL) are disordered. The span at 223–239 (PVTQAQLPPQQETTPAK) shows a compositional bias: polar residues. The span at 249-258 (DSLRKQLDQL) shows a compositional bias: basic and acidic residues.

Belongs to the PspA/Vipp/IM30 family. As to quaternary structure, polymerizes to form rings, filaments and ribbons. Rings are formed by stacked rungs that tilt to give a dome-shaped curvature. Rings form with symmetries ranging from C11 (55 subunits) to C17 (119 subunits).

Its subcellular location is the cell inner membrane. A membrane remodeling protein capable of forming rings and/or filaments on membranes, which then curve and tubulate the bilayer. Rings will form on liposomes, altering their positive curvature so the lipid bilayer is remodeled into a negative curve as the membrane enters the ring. Ring stacks of varying lengths can be seen joining isolated liposomes. A lipid monolayer can be drawn into the center of the rings. Required for thylakoid formation. The polypeptide is Membrane-associated protein Vipp1 (Nostoc punctiforme (strain ATCC 29133 / PCC 73102)).